We begin with the raw amino-acid sequence, 768 residues long: UPF0313 protein VV1_2212 (768 aa).

Residues 363–640 (AYDMIKTSVN…LHKALLRYHD (278 aa)) form the Radical SAM core domain. Residues C377, C381, and C384 each contribute to the [4Fe-4S] cluster site. A disordered region spans residues 674–768 (DARTPAQRRK…GGRNQPSRAR (95 aa)). The span at 679–689 (AQRRKSGRHGA) shows a compositional bias: basic residues. The segment covering 719 to 731 (GGQSNSAPSRSGS) has biased composition (polar residues).

The protein belongs to the UPF0313 family. The cofactor is [4Fe-4S] cluster.

This chain is UPF0313 protein VV1_2212, found in Vibrio vulnificus (strain CMCP6).